A 511-amino-acid chain; its full sequence is Potassium voltage-gated channel subfamily A member 10 (511 aa).

The disordered stretch occupies residues 25 to 44 (EPGYATDFDPTSSKGRPGSS). The chain crosses the membrane as a helical span at residues 218–238 (VAVVSVLVVVISITIFCLETL). The chain crosses the membrane as a helical span at residues 271 to 292 (FFMVESTCIVWFTFELVLRFVV). A lipid anchor (S-palmitoyl cysteine) is attached at Cys-293. The helical transmembrane segment at 303-323 (IMNIIDIISIIPYFATLITEL) threads the bilayer. The helical; Voltage-sensor transmembrane segment at 339 to 358 (ILRIIRLVRVFRIFKLSRHS) threads the bilayer. A helical membrane pass occupies residues 375–395 (LGLLIFFLFIGVILFSSAVYF). The short motif at 421-426 (TVGYGD) is the Selectivity filter element. Residues 436-456 (IVGTLCAIAGVLTIALPVPVI) form a helical membrane-spanning segment. Residues 489–511 (SRMGSTESLNKTNGSCSAEKSRK) are disordered.

It belongs to the potassium channel family. A (Shaker) (TC 1.A.1.2) subfamily. Kv1.8/KCNA10 sub-subfamily. In terms of assembly, homotetramer. Interacts with KCN4B/POMP. Interaction with KCN4B/POMP is necessary for the modulation of channel activity by cAMP. Expressed strongly in the inner ear and weakly in skeletal muscle. Not detected in other tissues.

The protein resides in the membrane. It carries out the reaction K(+)(in) = K(+)(out). With respect to regulation, the channel activity is up-regulated by cAMP. Voltage-gated potassium ion channel that mediates K(+) permeability of excitable membranes. When opened in response to the voltage difference across the membrane, KCNA10 channel selectively allows the flow of potassium ions across the membrane down their electrochemical gradient. The protein is Potassium voltage-gated channel subfamily A member 10 of Mus musculus (Mouse).